The following is a 176-amino-acid chain: Inner membrane protein p54 (176 aa).

Residues 32 to 52 traverse the membrane as a helical segment; it reads YTILIAIVVLIIIIIVLIYLF. Residues 82–176 form a disordered region; it reads VTPQPGIAKP…YTHKDLENSL (95 aa). Residues 123 to 154 show a composition bias toward low complexity; that stretch reads GMAAGGPAAASAPAHPAELYTTATTQNTASQT. Positions 142-154 are interaction with host DYNLL1; it reads YTTATTQNTASQT.

This sequence belongs to the asfivirus envelope protein p54 family. As to quaternary structure, interacts with the host light chain cytoplasmic dynein DYNLL1; this interaction is critical for intracellular microtubule-dependent virus transport toward viral factories.

It localises to the virion membrane. It is found in the host cytoplasm. Its subcellular location is the host cytoskeleton. The protein localises to the host endoplasmic reticulum membrane. Its function is as follows. Inner envelope protein involved, through its interaction with host dynein, in the intracellular microtubule-dependent transport of viral capsid toward viral factories. Seems to induce caspase-3 activation and apoptosis. Plays a role in virion morphogenesis by recruiting and transforming the host ER membranes into the precursors of the viral envelope. Involved in virus attachment to the host cell. The chain is Inner membrane protein p54 from African swine fever virus (isolate Tick/Malawi/Lil 20-1/1983) (ASFV).